Consider the following 231-residue polypeptide: MENGAAPTAPAVIVAIDGPSGTGKSSTSKAVAAQLGLSYLDTGAQYRAITWWMVTNGIDTDDPHAVAAAAGKPEIVSGTDPAGPTITVDGVDVAGPIRTQEVTSKVSAVSAVPEVRARITELQRTIAAAAPLGIVVEGRDIGTTVLPDADLKIFLTASAEARAARRSGELKGADVHATREALIKRDAADSSRKTSPLAKAGDAVEVDTTALSLPQVIECVVTLVEEKRAGK.

Glycine 18–serine 26 contributes to the ATP binding site.

Belongs to the cytidylate kinase family. Type 1 subfamily.

Its subcellular location is the cytoplasm. It catalyses the reaction CMP + ATP = CDP + ADP. The catalysed reaction is dCMP + ATP = dCDP + ADP. The chain is Cytidylate kinase from Streptomyces coelicolor (strain ATCC BAA-471 / A3(2) / M145).